Reading from the N-terminus, the 250-residue chain is DNA polymerase sliding clamp (250 aa).

Belongs to the PCNA family. As to quaternary structure, homotrimer. The subunits circularize to form a toroid; DNA passes through its center. Replication factor C (RFC) is required to load the toroid on the DNA.

Functionally, sliding clamp subunit that acts as a moving platform for DNA processing. Responsible for tethering the catalytic subunit of DNA polymerase and other proteins to DNA during high-speed replication. The protein is DNA polymerase sliding clamp of Methanococcus maripaludis (strain C6 / ATCC BAA-1332).